A 172-amino-acid chain; its full sequence is Allergen Bos d 2 (172 aa).

Residues 1-16 (MKAVFLTLLFGLVCTA) form the signal peptide. Q17 is modified (pyrrolidone carboxylic acid). 2 disulfides stabilise this stretch: C60–C64 and C79–C170.

The protein belongs to the calycin superfamily. Lipocalin family. Found exclusively in skin. Produced in sweat glands and transported to the skin surface.

Its subcellular location is the secreted. Functionally, probable pheromone carrier. This chain is Allergen Bos d 2, found in Bos taurus (Bovine).